Here is a 354-residue protein sequence, read N- to C-terminus: MKFVDEVKIHVKAGDGGDGAVAWRREKFIPRGGPAGGDGGNGGDVVLEVDPQLSTLLDYRYIREHKARNGEKGSGSDMNGKDGADLVLRVPPGTVVKDAATGEQLCDLGAAGERVVIAKGGRGGLGNMNFASSTNQAPRYAEDGTPGAERDLVLELKLLADVGIVGYPNAGKSTLISRISRARPKIADYPFTTLTPNLGVVGWRERSFVVADIPGLIEGAHAGAGLGHQFLRHVERCRVLIHLVEGANPEPGRAPRADLDAINAELAAYSDELAKKPQIVAVTKIDVPEARAAGVKLQKLLGRRKKPVPVHLVSAVTGEGLDALLDAVGRALFKEARPHRGGGGKKLAKPRARA.

The Obg domain occupies 1–159; that stretch reads MKFVDEVKIH…RDLVLELKLL (159 aa). In terms of domain architecture, OBG-type G spans 160–333; that stretch reads ADVGIVGYPN…LLDAVGRALF (174 aa). Residues 166–173, 191–195, 212–215, 283–286, and 314–316 contribute to the GTP site; these read GYPNAGKS, FTTLT, DIPG, TKID, and SAV. Residues S173 and T193 each contribute to the Mg(2+) site.

This sequence belongs to the TRAFAC class OBG-HflX-like GTPase superfamily. OBG GTPase family. Monomer. Mg(2+) is required as a cofactor.

The protein localises to the cytoplasm. Functionally, an essential GTPase which binds GTP, GDP and possibly (p)ppGpp with moderate affinity, with high nucleotide exchange rates and a fairly low GTP hydrolysis rate. Plays a role in control of the cell cycle, stress response, ribosome biogenesis and in those bacteria that undergo differentiation, in morphogenesis control. The sequence is that of GTPase Obg from Anaeromyxobacter sp. (strain K).